Consider the following 293-residue polypeptide: Formamidopyrimidine-DNA glycosylase (293 aa).

The active-site Schiff-base intermediate with DNA is Pro-2. Glu-3 acts as the Proton donor in catalysis. Lys-60 acts as the Proton donor; for beta-elimination activity in catalysis. Positions 110, 129, and 174 each coordinate DNA. The FPG-type zinc-finger motif lies at 259–293 (NVYRRTGKKCHACKNLIERQKISGRSTHWCRKCQK). Arg-283 acts as the Proton donor; for delta-elimination activity in catalysis.

This sequence belongs to the FPG family. In terms of assembly, monomer. Zn(2+) is required as a cofactor.

The catalysed reaction is Hydrolysis of DNA containing ring-opened 7-methylguanine residues, releasing 2,6-diamino-4-hydroxy-5-(N-methyl)formamidopyrimidine.. It catalyses the reaction 2'-deoxyribonucleotide-(2'-deoxyribose 5'-phosphate)-2'-deoxyribonucleotide-DNA = a 3'-end 2'-deoxyribonucleotide-(2,3-dehydro-2,3-deoxyribose 5'-phosphate)-DNA + a 5'-end 5'-phospho-2'-deoxyribonucleoside-DNA + H(+). Involved in base excision repair of DNA damaged by oxidation or by mutagenic agents. Acts as a DNA glycosylase that recognizes and removes damaged bases. Has a preference for oxidized purines, such as 7,8-dihydro-8-oxoguanine (8-oxoG). Has AP (apurinic/apyrimidinic) lyase activity and introduces nicks in the DNA strand. Cleaves the DNA backbone by beta-delta elimination to generate a single-strand break at the site of the removed base with both 3'- and 5'-phosphates. In Prochlorococcus marinus (strain MIT 9515), this protein is Formamidopyrimidine-DNA glycosylase.